Reading from the N-terminus, the 1135-residue chain is Glutamate receptor ionotropic, NMDA 3A (1135 aa).

The N-terminal stretch at 1-23 is a signal peptide; sequence MRRLSLWWLLSRVCLLLPPPCAL. At 24 to 674 the chain is on the extracellular side; sequence VLAGVPSSSS…PIGAFMWPLH (651 aa). Residues 60–117 form a disordered region; that stretch reads TAPRAASRAQEGGRAGAQRDDPESGTWRPPAPSQGARWLGSALHGRGPPGSRKLGEGA. N-linked (GlcNAc...) asparagine glycosylation is found at asparagine 145, asparagine 264, asparagine 275, asparagine 285, asparagine 296, asparagine 300, asparagine 426, asparagine 439, asparagine 549, and asparagine 565. Intrachain disulfides connect cysteine 537-cysteine 575 and cysteine 543-cysteine 576. Residues serine 631, serine 633, and arginine 638 each coordinate glycine. Positions 633 and 638 each coordinate D-serine. Residues 675–694 traverse the membrane as a helical segment; it reads WTMWLGIFVALHITAIFLTL. The Cytoplasmic portion of the chain corresponds to 695-715; sequence YEWKSPFGMTPKGRNRNKVFS. The segment at residues 716–727 is an intramembrane region (discontinuously helical); sequence FSSALNVCYALL. Over 728–741 the chain is Cytoplasmic; that stretch reads FGRTAAIKPPKCWT. Residues 742 to 761 traverse the membrane as a helical segment; sequence GRFLMNLWAIFCMFCLSTYT. Over 762 to 932 the chain is Extracellular; sequence ANLAAVMVGE…TLQMGIKHFS (171 aa). Serine 801 contacts glycine. Residues serine 801, alanine 802, and aspartate 845 each contribute to the D-serine site. Aspartate 845 lines the glycine pocket. Cysteine 859 and cysteine 913 are oxidised to a cystine. N-linked (GlcNAc...) asparagine glycosylation is present at asparagine 886. The chain crosses the membrane as a helical span at residues 933 to 948; sequence GLFVLLCIGFGLSILT. Topologically, residues 949–1135 are cytoplasmic; that stretch reads TIGEHIVHRL…YQKTNRTCES (187 aa). Positions 951 to 987 are PPP2CB binding site; that stretch reads GEHIVHRLLLPRIKNKSKLQYWLHTSQRFHRALNTSF. Positions 1080-1129 form a coiled coil; the sequence is TTNGKADSLNVTRSSVIQELSELEKQIQVIRQELQLAVSRKTELEEYQKT. The interval 1082-1115 is GIT1-binding; the sequence is NGKADSLNVTRSSVIQELSELEKQIQVIRQELQL.

The protein belongs to the glutamate-gated ion channel (TC 1.A.10.1) family. NR3A/GRIN3A subfamily. In terms of assembly, heterotetramer. Forms heterotetrameric channels composed of two GluN1/zeta subunits (GRIN1), and two identical GluN3 subunits (GRIN3A or GRIN3B) (in vitro). Can also form heterotetrameric channels that contain at least two GluN1 subunits and at least a combination of one GluN2 and one GluN3 subunits (in vitro). Does not form functional homomeric channels. Found in a complex with GRIN1, GRIN2A or GRIN2B and PPP2CB. Probably interacts with PPP2CB. No complex with PPP2CB is detected when NMDARs are stimulated by NMDA. Interacts (via C-terminus) with GIT1, but not with GRIA1/GluA1, nor with synaptophysin/SYP; this interaction competes with GIT1 interaction with ARHGEF7/beta-PIX. In terms of processing, N-glycosylated. As to expression, isoform 1 and isoform 2 are expressed in olfactory bulb, frontal occipital, entorhinal and pyriform cortices, hippocampus, striatum, thalamus, cerebellum and spinal cord.

It is found in the cell membrane. It localises to the postsynaptic cell membrane. Its subcellular location is the postsynaptic density. The enzyme catalyses Ca(2+)(in) = Ca(2+)(out). It carries out the reaction Na(+)(in) = Na(+)(out). With respect to regulation, excitatory glycine receptors are inhibited by D-serine at a concentrion of 10uM. Its function is as follows. Component of a non-conventional N-methyl-D-aspartate (NMDA) receptors (NMDARs) that function as heterotetrameric, ligand-gated cation channels with low calcium permeability and low voltage-dependent block by Mg(2+). During the development of neural circuits, participates in the synaptic refinement period, restricting spine maturation and growth. Forms glutamatergic receptor complexes with GluN1 and GluN2 subunits which are activated by glycine binding to the GluN1 and GluN3 subunits and L-glutamate binding to GluN2 subunits. Forms excitatory glycinergic receptor complexes with GluN1 alone which are activated by glycine binding to the GluN1 and GluN3 subunits. GluN3A subunit also binds D-serine. Each GluN3 subunit confers differential attributes to channel properties, including activation, deactivation and desensitization kinetics, pH sensitivity, Ca2(+) permeability, and binding to allosteric modulators. By competing with GIT1 interaction with ARHGEF7/beta-PIX, may reduce GIT1/ARHGEF7-regulated local activation of RAC1, hence affecting signaling and limiting the maturation and growth of inactive synapses. The sequence is that of Glutamate receptor ionotropic, NMDA 3A from Rattus norvegicus (Rat).